Consider the following 273-residue polypeptide: Homeobox protein ceh-43 (273 aa).

2 disordered regions span residues 47–79 (NGAT…EEAF) and 153–204 (RRSK…LVSS). Positions 102–161 (MRKPRTIYNSSQLQMLQKKFQKTQYLALPDRAALAHELGLSQTQVKIWFQNRRSKQKKQK) form a DNA-binding region, homeobox.

This sequence belongs to the distal-less homeobox family. In terms of tissue distribution, predominantly expressed in the head hypdodermis, neuronal support cells and CAN neurons.

It is found in the nucleus. In terms of biological role, probable transcription factor. Binds to the sequence motif 5'-ATAAT-3' in regulatory elements. Required for development of the anterior hypodermis during embryonic morphogenesis for cell adhesion; also affects embryonic and larval viability. Modulates and maintains dopaminergic neuron differentiation. May activate dopamine pathway genes in concert with ETS domain-containing protein ast-1, and homeobox proteins ceh-40 and ceh-20. This is Homeobox protein ceh-43 (ceh-43) from Caenorhabditis elegans.